The sequence spans 224 residues: A-factor barrier protein 1 (224 aa).

Residues 1-25 form the signal peptide; the sequence is MIFAPSFSLIKNILLVSFLISHSFA. Residues Asn-148, Asn-181, and Asn-191 are each glycosylated (N-linked (GlcNAc...) asparagine). Residue Asn-203 is the site of GPI-anchor amidated asparagine attachment. Residues 204–224 constitute a propeptide, removed in mature form; that stretch reads GAHAKSLYFPMALFGIFAVAL.

Belongs to the SRP1/TIP1 family. In terms of processing, the GPI-anchor is attached to the protein in the endoplasmic reticulum and serves to target the protein to the cell surface. There, the glucosamine-inositol phospholipid moiety is cleaved off and the GPI-modified mannoprotein is covalently attached via its lipidless GPI glycan remnant to the 1,6-beta-glucan of the outer cell wall layer.

Its subcellular location is the secreted. It is found in the cell wall. The protein resides in the membrane. MATalpha-specific protein that interferes with a-factor, the pheromone secreted by MATa cells. Contributes to mating efficiency. Acts to bind and sequester a-factor rather than to degrade it, and promotes the efficient mating of MATalpha cells by keeping the a-factor concentration at the plasma membrane within the narrow range needed for accurate pheromone gradient detection. In Saccharomyces cerevisiae (strain ATCC 204508 / S288c) (Baker's yeast), this protein is A-factor barrier protein 1.